Consider the following 562-residue polypeptide: Endoglucanase E1 (562 aa).

Residues 1 to 41 form the signal peptide; it reads MPRALRRVPGSRVMLRVGVVVAVLALVAALANLAVPRPARA. The interval 42–400 is catalytic; sequence AGGGYWHTSG…IKSSIFDPVG (359 aa). Cys-75 and Cys-161 are oxidised to a cystine. Glu-203 acts as the Proton donor in catalysis. Cys-209 and Cys-212 are disulfide-bonded. The Nucleophile role is filled by Glu-323. The tract at residues 399–462 is disordered; the sequence is VGASASPSSQ…PTPSPTAASG (64 aa). Composition is skewed to low complexity over residues 401 to 411 and 437 to 449; these read ASASPSSQPSP and PTPT…TPTP. The region spanning 458 to 562 is the CBM2 domain; the sequence is TAASGARCTA…AAPTVACAAS (105 aa).

This sequence belongs to the glycosyl hydrolase 5 (cellulase A) family.

It catalyses the reaction Endohydrolysis of (1-&gt;4)-beta-D-glucosidic linkages in cellulose, lichenin and cereal beta-D-glucans.. In terms of biological role, has a very high specific activity on carboxymethylcellulose. In Acidothermus cellulolyticus (strain ATCC 43068 / DSM 8971 / 11B), this protein is Endoglucanase E1.